The sequence spans 329 residues: Carbohydrate sulfotransferase chst-1 (329 aa).

The Cytoplasmic segment spans residues 1–3 (MLK). The helical; Signal-anchor for type II membrane protein transmembrane segment at 4-23 (WFIISCCLLTAISYSTYYLF) threads the bilayer. Residues 24–329 (TSNSWIKTVK…FDFDTTFINS (306 aa)) lie on the Lumenal side of the membrane. 3'-phosphoadenylyl sulfate contacts are provided by residues 91-97 (KKSMSTL) and 157-165 (RDPIARFIS).

It belongs to the sulfotransferase 2 family. In terms of tissue distribution, highly expressed in the head and tail of hermaphrodites, in particular in amphid and phasmid sheath cells.

It localises to the golgi apparatus membrane. It catalyses the reaction chondroitin beta-D-glucuronate + n 3'-phosphoadenylyl sulfate = chondroitin 4'-sulfate + n adenosine 3',5'-bisphosphate + n H(+). Catalyzes the transfer of sulfate to position 4 of non-reducing N-acetylgalactosamine (GalNAc) residue of chondroitin. This is Carbohydrate sulfotransferase chst-1 from Caenorhabditis elegans.